The sequence spans 106 residues: Pyrimidine/purine nucleoside phosphorylase (106 aa).

The protein belongs to the nucleoside phosphorylase PpnP family.

It catalyses the reaction a purine D-ribonucleoside + phosphate = a purine nucleobase + alpha-D-ribose 1-phosphate. It carries out the reaction adenosine + phosphate = alpha-D-ribose 1-phosphate + adenine. The enzyme catalyses cytidine + phosphate = cytosine + alpha-D-ribose 1-phosphate. The catalysed reaction is guanosine + phosphate = alpha-D-ribose 1-phosphate + guanine. It catalyses the reaction inosine + phosphate = alpha-D-ribose 1-phosphate + hypoxanthine. It carries out the reaction thymidine + phosphate = 2-deoxy-alpha-D-ribose 1-phosphate + thymine. The enzyme catalyses uridine + phosphate = alpha-D-ribose 1-phosphate + uracil. The catalysed reaction is xanthosine + phosphate = alpha-D-ribose 1-phosphate + xanthine. Catalyzes the phosphorolysis of diverse nucleosides, yielding D-ribose 1-phosphate and the respective free bases. Can use uridine, adenosine, guanosine, cytidine, thymidine, inosine and xanthosine as substrates. Also catalyzes the reverse reactions. The sequence is that of Pyrimidine/purine nucleoside phosphorylase from Burkholderia ambifaria (strain ATCC BAA-244 / DSM 16087 / CCUG 44356 / LMG 19182 / AMMD) (Burkholderia cepacia (strain AMMD)).